We begin with the raw amino-acid sequence, 208 residues long: Putative archaetidylserine decarboxylase proenzyme (208 aa).

Residue serine 172 is the Schiff-base intermediate with substrate; via pyruvic acid of the active site. Serine 172 carries the post-translational modification Pyruvic acid (Ser); by autocatalysis.

It belongs to the phosphatidylserine decarboxylase family. PSD-A subfamily. As to quaternary structure, heterodimer of a large membrane-associated beta subunit and a small pyruvoyl-containing alpha subunit. Requires pyruvate as cofactor. Is synthesized initially as an inactive proenzyme. Formation of the active enzyme involves a self-maturation process in which the active site pyruvoyl group is generated from an internal serine residue via an autocatalytic post-translational modification. Two non-identical subunits are generated from the proenzyme in this reaction, and the pyruvate is formed at the N-terminus of the alpha chain, which is derived from the carboxyl end of the proenzyme. The post-translation cleavage follows an unusual pathway, termed non-hydrolytic serinolysis, in which the side chain hydroxyl group of the serine supplies its oxygen atom to form the C-terminus of the beta chain, while the remainder of the serine residue undergoes an oxidative deamination to produce ammonia and the pyruvoyl prosthetic group on the alpha chain.

It localises to the cell membrane. The catalysed reaction is archaetidylserine + H(+) = archaetidylethanolamine + CO2. Its function is as follows. Catalyzes the formation of archaetidylethanolamine (PtdEtn) from archaetidylserine (PtdSer). This is Putative archaetidylserine decarboxylase proenzyme from Methanosarcina acetivorans (strain ATCC 35395 / DSM 2834 / JCM 12185 / C2A).